Here is a 101-residue protein sequence, read N- to C-terminus: Urease subunit beta (101 aa).

It belongs to the urease beta subunit family. Heterotrimer of UreA (gamma), UreB (beta) and UreC (alpha) subunits. Three heterotrimers associate to form the active enzyme.

The protein localises to the cytoplasm. The enzyme catalyses urea + 2 H2O + H(+) = hydrogencarbonate + 2 NH4(+). It participates in nitrogen metabolism; urea degradation; CO(2) and NH(3) from urea (urease route): step 1/1. The polypeptide is Urease subunit beta (Cupriavidus pinatubonensis (strain JMP 134 / LMG 1197) (Cupriavidus necator (strain JMP 134))).